We begin with the raw amino-acid sequence, 338 residues long: Lipoate-protein ligase A (338 aa).

A BPL/LPL catalytic domain is found at 29-216; the sequence is PATQRVLFLW…AFFAHYGERV (188 aa). ATP contacts are provided by residues Arg-71, 76 to 79, and Lys-134; that span reads GAVF. Position 134 (Lys-134) interacts with (R)-lipoate.

This sequence belongs to the LplA family. In terms of assembly, monomer.

It is found in the cytoplasm. The catalysed reaction is L-lysyl-[lipoyl-carrier protein] + (R)-lipoate + ATP = N(6)-[(R)-lipoyl]-L-lysyl-[lipoyl-carrier protein] + AMP + diphosphate + H(+). Its pathway is protein modification; protein lipoylation via exogenous pathway; protein N(6)-(lipoyl)lysine from lipoate: step 1/2. It functions in the pathway protein modification; protein lipoylation via exogenous pathway; protein N(6)-(lipoyl)lysine from lipoate: step 2/2. Functionally, catalyzes both the ATP-dependent activation of exogenously supplied lipoate to lipoyl-AMP and the transfer of the activated lipoyl onto the lipoyl domains of lipoate-dependent enzymes. This Escherichia coli (strain SMS-3-5 / SECEC) protein is Lipoate-protein ligase A.